The following is a 1110-amino-acid chain: cGMP-specific 3',5'-cyclic phosphodiesterase (1110 aa).

Composition is skewed to low complexity over residues 1–25 (MTDV…SSAS) and 35–55 (TSTA…ASGA). Disordered regions lie at residues 1-55 (MTDV…ASGA), 67-128 (ISNQ…QQDV), and 184-203 (ASPT…SASS). Positions 88–103 (APYPPVPAAKPKPTPT) are enriched in pro residues. The span at 192–203 (SPRSLSNSSASS) shows a compositional bias: low complexity. GAF domains lie at 233–385 (DIDV…GIGI) and 417–601 (NLEC…GLGI). Positions 631-954 (SQDQTEKLTQ…RNWQDLAEKV (324 aa)) constitute a PDEase domain. Residue His-707 is the Proton donor of the active site. The a divalent metal cation site is built by His-711, His-747, Asp-748, and Asp-858. Disordered stretches follow at residues 997–1028 (AQHG…TGAL) and 1040–1110 (LYNS…CSLL). Composition is skewed to basic and acidic residues over residues 1006–1015 (DDSHTPEHQR) and 1056–1068 (LESH…DDKS). Residues 1082–1097 (GRMSASSSTSSAGTVV) show a composition bias toward low complexity. Residues 1100–1110 (SKKRSKLCSLL) show a composition bias toward basic residues. Cys-1107 is modified (cysteine methyl ester). Cys-1107 carries S-farnesyl cysteine lipidation. A propeptide spans 1108–1110 (SLL) (removed in mature form).

It belongs to the cyclic nucleotide phosphodiesterase family. In terms of assembly, interacts with PrBP. A divalent metal cation serves as cofactor.

It localises to the cell membrane. The enzyme catalyses 3',5'-cyclic GMP + H2O = GMP + H(+). Has a role regulating cGMP transport in Malpighian tubule principal cells. The protein is cGMP-specific 3',5'-cyclic phosphodiesterase of Drosophila pseudoobscura pseudoobscura (Fruit fly).